A 176-amino-acid polypeptide reads, in one-letter code: Transcriptional repressor MprA (176 aa).

One can recognise an HTH marR-type domain in the interval 26–160 (EILLTRLCMH…LEQITRKLLS (135 aa)).

In terms of biological role, negative regulator of the multidrug operon emrAB. The chain is Transcriptional repressor MprA (mprA) from Escherichia coli O157:H7.